We begin with the raw amino-acid sequence, 113 residues long: Tyrosine-protein phosphatase 15 (113 aa).

Positions 1–113 constitute a Tyrosine-protein phosphatase domain; it reads WRMVYDNNVN…RSTGDGVALI (113 aa).

Belongs to the protein-tyrosine phosphatase family.

It catalyses the reaction O-phospho-L-tyrosyl-[protein] + H2O = L-tyrosyl-[protein] + phosphate. This Styela plicata (Wrinkled sea squirt) protein is Tyrosine-protein phosphatase 15 (STY-15).